The following is a 308-amino-acid chain: CASP-like protein 4A2 (308 aa).

Residues 1-135 (MALEAQPSPS…APAPAPRVPA (135 aa)) are disordered. Over 1 to 161 (MALEAQPSPS…KRPTAVLQRT (161 aa)) the chain is Cytoplasmic. The segment covering 22 to 31 (GGAGAPGGSA) has biased composition (gly residues). Positions 32–44 (GDADAQARRATSG) are enriched in low complexity. 2 stretches are compositionally biased toward pro residues: residues 54-65 (RRSPPPPFPRTP) and 89-132 (FQPP…PAPR). A helical transmembrane segment spans residues 162-182 (ALVARVAAALLCLAALAVLAA). The Extracellular portion of the chain corresponds to 183-203 (DSRKGFALDSYSNYSQLRYSE). N-linked (GlcNAc...) asparagine glycosylation is present at Asn-195. Residues 204 to 224 (AVNVIGFVYSVLQFFVLADLM) form a helical membrane-spanning segment. The Cytoplasmic portion of the chain corresponds to 225 to 240 (RRNKHLNPRRKGDYFD). A helical membrane pass occupies residues 241 to 262 (FFMDQVLAYLLISSSSSATARV). Residues 263–280 (GDWIDNWGSDPFPKMANS) lie on the Extracellular side of the membrane. The N-linked (GlcNAc...) asparagine glycan is linked to Asn-279. A helical transmembrane segment spans residues 281 to 301 (SIAISFMAFLVFAISALISAY). Topologically, residues 302–308 (NLFRRDI) are cytoplasmic.

This sequence belongs to the Casparian strip membrane proteins (CASP) family. Homodimer and heterodimers.

The protein localises to the cell membrane. The protein is CASP-like protein 4A2 of Oryza sativa subsp. japonica (Rice).